Here is a 129-residue protein sequence, read N- to C-terminus: Small ribosomal subunit protein uS11 (129 aa).

Belongs to the universal ribosomal protein uS11 family. Part of the 30S ribosomal subunit. Interacts with proteins S7 and S18. Binds to IF-3.

Its function is as follows. Located on the platform of the 30S subunit, it bridges several disparate RNA helices of the 16S rRNA. Forms part of the Shine-Dalgarno cleft in the 70S ribosome. The chain is Small ribosomal subunit protein uS11 from Pelotomaculum thermopropionicum (strain DSM 13744 / JCM 10971 / SI).